The chain runs to 469 residues: Adenosylhomocysteinase (469 aa).

3 residues coordinate substrate: threonine 63, aspartate 139, and glutamate 164. Residue 165–167 participates in NAD(+) binding; it reads TTT. Substrate is bound by residues lysine 194 and aspartate 198. NAD(+) is bound by residues asparagine 199, 228–233, glutamate 251, asparagine 300, 321–323, and asparagine 375; these read GYGDVG and IGH.

It belongs to the adenosylhomocysteinase family. It depends on NAD(+) as a cofactor.

It is found in the cytoplasm. It carries out the reaction S-adenosyl-L-homocysteine + H2O = L-homocysteine + adenosine. Its pathway is amino-acid biosynthesis; L-homocysteine biosynthesis; L-homocysteine from S-adenosyl-L-homocysteine: step 1/1. May play a key role in the regulation of the intracellular concentration of adenosylhomocysteine. This is Adenosylhomocysteinase from Pseudomonas entomophila (strain L48).